Consider the following 202-residue polypeptide: Imidazoleglycerol-phosphate dehydratase (202 aa).

Belongs to the imidazoleglycerol-phosphate dehydratase family.

The protein localises to the cytoplasm. The enzyme catalyses D-erythro-1-(imidazol-4-yl)glycerol 3-phosphate = 3-(imidazol-4-yl)-2-oxopropyl phosphate + H2O. It functions in the pathway amino-acid biosynthesis; L-histidine biosynthesis; L-histidine from 5-phospho-alpha-D-ribose 1-diphosphate: step 6/9. This is Imidazoleglycerol-phosphate dehydratase from Rhizobium johnstonii (strain DSM 114642 / LMG 32736 / 3841) (Rhizobium leguminosarum bv. viciae).